A 585-amino-acid polypeptide reads, in one-letter code: Putative phospholipase B-like 2 (585 aa).

An N-terminal signal peptide occupies residues 1–35; it reads MAAPMDRTHGGRAARALRRALALASLAGLLLSGLA. Residues Asn-84, Asn-102, and Asn-106 are each glycosylated (N-linked (GlcNAc...) asparagine). Cys-138 and Cys-148 form a disulfide bridge. Asn-227 and Asn-432 each carry an N-linked (GlcNAc...) asparagine glycan. A disulfide bridge connects residues Cys-488 and Cys-491. Asn-511 carries an N-linked (GlcNAc...) asparagine glycan.

The protein belongs to the phospholipase B-like family. As to quaternary structure, interacts with IGF2R. Glycosylated; contains mannose 6-phosphate sugars.

It localises to the lysosome lumen. Its function is as follows. Putative phospholipase. The sequence is that of Putative phospholipase B-like 2 (Plbd2) from Rattus norvegicus (Rat).